The chain runs to 348 residues: Thioredoxin-related protein DsbJ (348 aa).

The N-terminal stretch at 1-32 (MILLQNIKRCSLKQLKVLATLLLSLSLPTLEA) is a signal peptide.

It localises to the periplasm. This Chlamydia pneumoniae (Chlamydophila pneumoniae) protein is Thioredoxin-related protein DsbJ (dsbJ).